Consider the following 201-residue polypeptide: Cytochrome c oxidase assembly protein CtaG (201 aa).

The Cytoplasmic portion of the chain corresponds to 1 to 13 (MTDQGENEKKQRR). A helical; Signal-anchor for type II membrane protein membrane pass occupies residues 14-36 (SNATIAVACLSFFVCMIGAAYAS). The Periplasmic segment spans residues 37-201 (VPLYRIFCQV…KAVGSTRNGG (165 aa)).

This sequence belongs to the COX11/CtaG family.

It localises to the cell inner membrane. Functionally, exerts its effect at some terminal stage of cytochrome c oxidase synthesis, probably by being involved in the insertion of the copper B into subunit I. The chain is Cytochrome c oxidase assembly protein CtaG from Brucella suis (strain ATCC 23445 / NCTC 10510).